Reading from the N-terminus, the 255-residue chain is Type III pantothenate kinase (255 aa).

Residue 6–13 coordinates ATP; that stretch reads DVGNTNTV. Substrate-binding positions include Tyr100 and 107 to 110; that span reads GADR. The active-site Proton acceptor is Asp109. Asp129 contributes to the K(+) binding site. Thr132 is an ATP binding site. Thr184 serves as a coordination point for substrate.

The protein belongs to the type III pantothenate kinase family. As to quaternary structure, homodimer. It depends on NH4(+) as a cofactor. Requires K(+) as cofactor.

The protein resides in the cytoplasm. It catalyses the reaction (R)-pantothenate + ATP = (R)-4'-phosphopantothenate + ADP + H(+). It functions in the pathway cofactor biosynthesis; coenzyme A biosynthesis; CoA from (R)-pantothenate: step 1/5. In terms of biological role, catalyzes the phosphorylation of pantothenate (Pan), the first step in CoA biosynthesis. The polypeptide is Type III pantothenate kinase (Acetivibrio thermocellus (strain ATCC 27405 / DSM 1237 / JCM 9322 / NBRC 103400 / NCIMB 10682 / NRRL B-4536 / VPI 7372) (Clostridium thermocellum)).